A 275-amino-acid polypeptide reads, in one-letter code: Nitrate import permease protein NrtB (275 aa).

The next 7 membrane-spanning stretches (helical) occupy residues 25–45 (VIRP…LCSG), 89–109 (VAVG…LIGS), 120–140 (IFQV…LAAL), 147–167 (AIFV…TVGA), 189–209 (FFNI…RIGI), 213–233 (WLAI…FFIW), and 238–258 (SSLI…GLLL). In terms of domain architecture, ABC transmembrane type-1 spans 82–262 (IFASLTRVAV…IVGLLLDRFI (181 aa)).

This sequence belongs to the binding-protein-dependent transport system permease family. CysTW subfamily. As to quaternary structure, the complex is composed of two ATP-binding proteins (NrtC and NrtD), two transmembrane proteins (NrtB) and a solute-binding protein (NrtA).

It localises to the cell inner membrane. Functionally, part of the ABC transporter complex NrtABCD involved in nitrate uptake. The complex is probably also involved in nitrite transport. Probably responsible for the translocation of the substrate across the membrane. This is Nitrate import permease protein NrtB (nrtB) from Synechocystis sp. (strain ATCC 27184 / PCC 6803 / Kazusa).